The primary structure comprises 161 residues: MAAKLILFVCATALVAQSVLSIGCGCGGRGYGGLGYGGLGYGGLGGGCGRGFSGGGLPVATASAAPTGLGIASENRYEGTVGVCGNLPFLGTADVAGEFPTAGIGEIDYGCGNGAVGITREGGFGYGAGYGDGYGLGFGGYGGGYGLGNGGYGGCGCGWGY.

The N-terminal stretch at 1–21 is a signal peptide; that stretch reads MAAKLILFVCATALVAQSVLS. The tract at residues 22–52 is left arm; the sequence is IGCGCGGRGYGGLGYGGLGYGGLGGGCGRGF. Repeat copies occupy residues 30-34, 35-39, and 40-44. Residues 30-44 are 3 X 5 AA tandem repeats of G-Y-G-G-L; sequence GYGGLGYGGLGYGGL. Residues 53–121 form a central domain region; sequence SGGGLPVATA…GNGAVGITRE (69 aa). Residues 122–161 form a right arm (Gly-rich tandem repeats) region; sequence GGFGYGAGYGDGYGLGFGGYGGGYGLGNGGYGGCGCGWGY.

The protein belongs to the chorion protein family.

Functionally, this protein is one of many from the eggshell of the silk moth. The polypeptide is Chorion class B protein L12 (Bombyx mori (Silk moth)).